Here is a 259-residue protein sequence, read N- to C-terminus: Phosphatidylglycerol--prolipoprotein diacylglyceryl transferase (259 aa).

Transmembrane regions (helical) follow at residues 12–32 (LSLH…VYLA), 46–66 (IIDF…IYYV), 83–103 (IWNG…VLFV), and 109–129 (VLNP…AQAI). Arginine 131 is an a 1,2-diacyl-sn-glycero-3-phospho-(1'-sn-glycerol) binding site. A run of 3 helical transmembrane segments spans residues 167 to 187 (VPTF…IMVW), 194 to 214 (LVDG…RLVI), and 226 to 246 (GIRV…VFIF).

This sequence belongs to the Lgt family.

Its subcellular location is the cell membrane. It catalyses the reaction L-cysteinyl-[prolipoprotein] + a 1,2-diacyl-sn-glycero-3-phospho-(1'-sn-glycerol) = an S-1,2-diacyl-sn-glyceryl-L-cysteinyl-[prolipoprotein] + sn-glycerol 1-phosphate + H(+). It participates in protein modification; lipoprotein biosynthesis (diacylglyceryl transfer). Catalyzes the transfer of the diacylglyceryl group from phosphatidylglycerol to the sulfhydryl group of the N-terminal cysteine of a prolipoprotein, the first step in the formation of mature lipoproteins. This Streptococcus equi subsp. equi (strain 4047) protein is Phosphatidylglycerol--prolipoprotein diacylglyceryl transferase.